The sequence spans 353 residues: Rhodopsin (353 aa).

Topologically, residues 1–36 (MNGTEGPYFYVPMVNTSGIVRSPYEYPQYYLVNPAA) are extracellular. Asparagine 2 and asparagine 15 each carry an N-linked (GlcNAc...) asparagine glycan. A helical transmembrane segment spans residues 37-61 (YAALGAYMFLLILVGFPINFLTLYV). Residues 62–73 (TIEHKKLRTPLN) are Cytoplasmic-facing. A helical membrane pass occupies residues 74-96 (YILLNLAVADLFMVFGGFTTTMY). The Extracellular portion of the chain corresponds to 97 to 110 (TSMHGYFVLGRLGC). Residues cysteine 110 and cysteine 187 are joined by a disulfide bond. A helical transmembrane segment spans residues 111-133 (NIEGFFATLGGEIALWSLVVLAI). Positions 134-136 (ERW) match the 'Ionic lock' involved in activated form stabilization motif. Residues 134-152 (ERWVVVCKPISNFRFGENH) are Cytoplasmic-facing. The helical transmembrane segment at 153-173 (AIMGLAFTWLMALACAAPPLV) threads the bilayer. Topologically, residues 174 to 202 (GWSRYIPEGMQCSCGIDYYTRAEGFNNES) are extracellular. Asparagine 200 is a glycosylation site (N-linked (GlcNAc...) asparagine). A helical transmembrane segment spans residues 203–224 (FVIYMFICHFSIPLLVVFFCYG). At 225 to 252 (RLLCAVKEAAAAQQESETTQRAEREVTR) the chain is on the cytoplasmic side. A helical transmembrane segment spans residues 253 to 274 (MVIMMVIAFLVCWLPYASVAWW). Residues 275–286 (IFTHQGSDFGPV) lie on the Extracellular side of the membrane. Residues 287–308 (FMTIPAFFAKSSSIYNPMIYIC) traverse the membrane as a helical segment. An N6-(retinylidene)lysine modification is found at lysine 296. Residues 309-353 (LNKQFRHCMITTLCCGKNPFEEEEGASTASKTEASSVSSSSVSPA) are Cytoplasmic-facing. Residues cysteine 322 and cysteine 323 are each lipidated (S-palmitoyl cysteine). Residues 331 to 353 (EEGASTASKTEASSVSSSSVSPA) are disordered. Low complexity predominate over residues 334-353 (ASTASKTEASSVSSSSVSPA).

It belongs to the G-protein coupled receptor 1 family. Opsin subfamily. In terms of processing, phosphorylated on some or all of the serine and threonine residues present in the C-terminal region. Contains one covalently linked retinal chromophore.

It is found in the membrane. It localises to the cell projection. The protein localises to the cilium. Its subcellular location is the photoreceptor outer segment. Photoreceptor required for image-forming vision at low light intensity. While most salt water fish species use retinal as chromophore, most freshwater fish use 3-dehydroretinal, or a mixture of retinal and 3-dehydroretinal. Light-induced isomerization of 11-cis to all-trans retinal triggers a conformational change that activates signaling via G-proteins. Subsequent receptor phosphorylation mediates displacement of the bound G-protein alpha subunit by arrestin and terminates signaling. This Diplodus vulgaris (Common two-banded seabream) protein is Rhodopsin (rho).